We begin with the raw amino-acid sequence, 192 residues long: Large ribosomal subunit protein uL6 (192 aa).

This sequence belongs to the universal ribosomal protein uL6 family. Part of the 50S ribosomal subunit.

Functionally, this protein binds to the 23S rRNA, and is important in its secondary structure. It is located near the subunit interface in the base of the L7/L12 stalk, and near the tRNA binding site of the peptidyltransferase center. The sequence is that of Large ribosomal subunit protein uL6 from Nanoarchaeum equitans (strain Kin4-M).